A 378-amino-acid polypeptide reads, in one-letter code: Putative glutamate--cysteine ligase 2 (378 aa).

Belongs to the glutamate--cysteine ligase type 2 family. YbdK subfamily.

It catalyses the reaction L-cysteine + L-glutamate + ATP = gamma-L-glutamyl-L-cysteine + ADP + phosphate + H(+). Functionally, ATP-dependent carboxylate-amine ligase which exhibits weak glutamate--cysteine ligase activity. This Jannaschia sp. (strain CCS1) protein is Putative glutamate--cysteine ligase 2.